We begin with the raw amino-acid sequence, 77 residues long: Apelin (77 aa).

The N-terminal stretch at M1–G22 is a signal peptide. Positions G23–H41 are excised as a propeptide. Positions V43–F77 are disordered. Residues G58 to H71 are compositionally biased toward basic residues.

It belongs to the apelin family. Post-translationally, several active peptides may be produced by proteolytic processing of the peptide precursor. Expressed in the brain with highest levels in the frontal cortex, thalamus, hypothalamus and midbrain. Secreted by the mammary gland into the colostrum and the milk.

It is found in the secreted. The protein localises to the extracellular space. In terms of biological role, peptide hormone that functions as endogenous ligand for the G-protein-coupled apelin receptor (APLNR/APJ), that plays a role in cadiovascular homeostasis. Functions as a balanced agonist activating both G(i) protein pathway and beta-arrestin pathway of APLNR. Downstream G proteins activation, apelin can inhibit cAMP production and activate key intracellular effectors such as ERKs. On the other hand, APLNR activation induces beta-arrestin recruitment to the membrane leading to desensitization and internalization of the receptor. Apelin blunts cardiac hypertrophic induction from APLNR on response to pathological stimuli, but also induces myocardial hypertrophy under normal conditions. Apelin-36 dissociates more hardly than (pyroglu)apelin-13 from APLNR. Involved in the regulation of cardiac precursor cell movements during gastrulation and heart morphogenesis. Has an inhibitory effect on cytokine production in response to T-cell receptor/CD3 cross-linking; the oral intake of apelin in the colostrum and the milk might therefore modulate immune responses in neonates. Plays a role in early coronary blood vessels formation. Mediates myocardial contractility in an ERK1/2-dependent manner. May also have a role in the central control of body fluid homeostasis by influencing vasopressin release and drinking behavior. Its function is as follows. (Microbial infection) Endogenous ligand for the apelin receptor (APLNR), an alternative coreceptor with CD4 for HIV-1 infection. Inhibits HIV-1 entry in cells coexpressing CD4 and APLNR. Apelin-36 has a greater inhibitory activity on HIV infection than other synthetic apelin derivatives. This is Apelin from Homo sapiens (Human).